The following is a 367-amino-acid chain: MKLLTALSELISIFLFTTIFIFLARKVAIKIGLVDKPNFRKRHQGVIPLVGGISVFAGICFMFGLSDYYIPHLSLYLICAGVLVFVGAMDDRFDISVKIRAVVQAVIAVVMMVIAKLHLGSLGYIFGPWELVLGPFGYFLTLFAVWAAINAFNMVDGIDGLLGGLSSVSFAAMGLILWFDGQTSLAMWCFAMIAAILPYIMLNLGILGRRYKVFMGDAGSTLIGFTVIWLLLETTQGKTHSISPVTALWIIAIPLMDMVAIMYRRLRKGMSPFSPDRQHIHHLVMRAGFTSRQAFVLITLAAAILAGVGVTAEYSHFVPEWVMLVLFLLAFFLYGYCIKRAWKVARFIKRVKRRLRRQRENRPNLTK.

9 helical membrane-spanning segments follow: residues 3 to 23, 45 to 65, 69 to 89, 129 to 149, 158 to 178, 187 to 207, 213 to 233, 242 to 262, and 318 to 338; these read LLTA…FIFL, GVIP…MFGL, YIPH…VGAM, WELV…WAAI, IDGL…LILW, MWCF…LGIL, VFMG…LLLE, ISPV…VAIM, and VPEW…GYCI.

The protein belongs to the glycosyltransferase 4 family. WecA subfamily. It depends on Mg(2+) as a cofactor. Mn(2+) is required as a cofactor.

The protein localises to the cell inner membrane. It catalyses the reaction di-trans,octa-cis-undecaprenyl phosphate + UDP-N-acetyl-alpha-D-glucosamine = N-acetyl-alpha-D-glucosaminyl-di-trans,octa-cis-undecaprenyl diphosphate + UMP. It participates in bacterial outer membrane biogenesis; LPS O-antigen biosynthesis. Its pathway is bacterial outer membrane biogenesis; enterobacterial common antigen biosynthesis. With respect to regulation, inhibited by tunicamycin. Functionally, catalyzes the transfer of the GlcNAc-1-phosphate moiety from UDP-GlcNAc onto the carrier lipid undecaprenyl phosphate (C55-P), yielding GlcNAc-pyrophosphoryl-undecaprenyl (GlcNAc-PP-C55). This is Undecaprenyl-phosphate alpha-N-acetylglucosaminyl 1-phosphate transferase from Salmonella typhimurium (strain LT2 / SGSC1412 / ATCC 700720).